Reading from the N-terminus, the 382-residue chain is MNLKEKTRALFAEIFGYPATHTIQAPGRVNLIGEHTDYNDGFVLPCAIDYQTVISCAPRDDRTVRVIAADYDNQVDEFSLDAPIVTHDSQQWSNYVRGVVKHLQQRNNAFGGVDMVISGNVPQGAGLSSSASLEVAVGTVFQQLYHLPLDGAQIALNGQEAENQFVGCNCGIMDQLISALGKKDHALLIDCRTLGAKAVSMPKGVAVVIINSNFKRTLVGSEYNTRREQCETGARFFQQPALRDVSLEAFNAVASELDPVVAKRVRHVLSENARTVEAASALEKGDLQRMGQLMAESHASMRDDFEITVPQIDTLVDIVKATIGDRGGVRMTGGGFGGCVVALIPEDLVPAVRQAVAQQYEAKTGIKETFYVCKPSQGAGQC.

34–37 (EHTD) lines the substrate pocket. 124–130 (GAGLSSS) is a binding site for ATP. Residues Ser130 and Glu162 each coordinate Mg(2+). Asp174 functions as the Proton acceptor in the catalytic mechanism. A substrate-binding site is contributed by Tyr223.

Belongs to the GHMP kinase family. GalK subfamily.

Its subcellular location is the cytoplasm. The enzyme catalyses alpha-D-galactose + ATP = alpha-D-galactose 1-phosphate + ADP + H(+). It participates in carbohydrate metabolism; galactose metabolism. In terms of biological role, catalyzes the transfer of the gamma-phosphate of ATP to D-galactose to form alpha-D-galactose-1-phosphate (Gal-1-P). The sequence is that of Galactokinase from Salmonella newport (strain SL254).